Here is a 533-residue protein sequence, read N- to C-terminus: Apolipoprotein N-acyltransferase (533 aa).

Helical transmembrane passes span 17–37 (ALLA…FGFF), 74–94 (WLFG…ALLI), 105–125 (LAIL…AVLA), 127–147 (LLWS…GLLE), 178–198 (VIGV…PALL), and 205–225 (VPGI…GYYA). The CN hydrolase domain occupies 245–495 (VQPAIDQEAK…QGFVDSTLSG (251 aa)). Residue Glu290 is the Proton acceptor of the active site. Lys354 is an active-site residue. Cys407 functions as the Nucleophile in the catalytic mechanism. Residues 509-529 (YFWLIIGIVGMIAVISRMGFI) traverse the membrane as a helical segment.

It belongs to the CN hydrolase family. Apolipoprotein N-acyltransferase subfamily.

It is found in the cell inner membrane. The enzyme catalyses N-terminal S-1,2-diacyl-sn-glyceryl-L-cysteinyl-[lipoprotein] + a glycerophospholipid = N-acyl-S-1,2-diacyl-sn-glyceryl-L-cysteinyl-[lipoprotein] + a 2-acyl-sn-glycero-3-phospholipid + H(+). The protein operates within protein modification; lipoprotein biosynthesis (N-acyl transfer). In terms of biological role, catalyzes the phospholipid dependent N-acylation of the N-terminal cysteine of apolipoprotein, the last step in lipoprotein maturation. This is Apolipoprotein N-acyltransferase from Rhizobium rhizogenes (strain K84 / ATCC BAA-868) (Agrobacterium radiobacter).